Here is a 60-residue protein sequence, read N- to C-terminus: Ixodegrin-like peptide (60 aa).

The first 19 residues, 1–19 (MNAVFIAALLILGTSTFDA), serve as a signal peptide directing secretion. A Cell attachment site motif is present at residues 49–51 (RGD).

The protein belongs to the ixodegrin family. Contains 3 disulfide bonds. As to expression, expressed in salivary glands.

Its subcellular location is the secreted. Tick salivary platelet aggregation inhibitor that plays an important part in the anti-hemostatic strategy of ticks. Inhibits platelet aggregation induced by ADP, thrombin and thromboxane A2 (TXA2). Blocks platelet adhesion to soluble collagen (most probably through the binding to alpha-2/beta-1 integrin (ITGA2/ITGB1)) and binds to purified glycoprotein IIb/IIIa (ITGA2B/ITGB3) in a dose-dependent manner. In vivo, reduces thrombus weight effectively in a rat arteriovenous shunt model and inhibits thrombosis in a carrageenan-induced mouse tail thrombosis model. The chain is Ixodegrin-like peptide from Ixodes scapularis (Black-legged tick).